A 361-amino-acid polypeptide reads, in one-letter code: Phospho-N-acetylmuramoyl-pentapeptide-transferase (361 aa).

10 helical membrane-spanning segments follow: residues 25-45 (RGIL…PAVI), 73-93 (TMGG…WGDL), 98-118 (VWLV…DDWI), 139-159 (IFGL…AAIT), 168-188 (IALP…IVGF), 200-220 (GLAI…AYAS), 237-257 (AGEL…FLWF), 264-284 (VFMG…IAVI), 289-309 (MVLV…IIQV), and 339-359 (VIVR…ATLK).

Belongs to the glycosyltransferase 4 family. MraY subfamily. It depends on Mg(2+) as a cofactor.

It is found in the cell inner membrane. It catalyses the reaction UDP-N-acetyl-alpha-D-muramoyl-L-alanyl-gamma-D-glutamyl-meso-2,6-diaminopimeloyl-D-alanyl-D-alanine + di-trans,octa-cis-undecaprenyl phosphate = di-trans,octa-cis-undecaprenyl diphospho-N-acetyl-alpha-D-muramoyl-L-alanyl-D-glutamyl-meso-2,6-diaminopimeloyl-D-alanyl-D-alanine + UMP. Its pathway is cell wall biogenesis; peptidoglycan biosynthesis. Catalyzes the initial step of the lipid cycle reactions in the biosynthesis of the cell wall peptidoglycan: transfers peptidoglycan precursor phospho-MurNAc-pentapeptide from UDP-MurNAc-pentapeptide onto the lipid carrier undecaprenyl phosphate, yielding undecaprenyl-pyrophosphoryl-MurNAc-pentapeptide, known as lipid I. In Xanthomonas oryzae pv. oryzae (strain PXO99A), this protein is Phospho-N-acetylmuramoyl-pentapeptide-transferase.